Here is a 246-residue protein sequence, read N- to C-terminus: ATP synthase subunit a, chloroplastic (246 aa).

The next 5 helical transmembrane spans lie at 35 to 55 (AQVL…TFLA), 94 to 114 (IPFI…GALI), 132 to 152 (DINT…YAGL), 198 to 218 (LVVA…MMFL), and 219 to 239 (GLFT…AYIG).

Belongs to the ATPase A chain family. In terms of assembly, F-type ATPases have 2 components, CF(1) - the catalytic core - and CF(0) - the membrane proton channel. CF(1) has five subunits: alpha(3), beta(3), gamma(1), delta(1), epsilon(1). CF(0) has four main subunits: a, b, b' and c.

It is found in the plastid. The protein localises to the chloroplast thylakoid membrane. Key component of the proton channel; it plays a direct role in the translocation of protons across the membrane. This is ATP synthase subunit a, chloroplastic from Chara vulgaris (Common stonewort).